Consider the following 219-residue polypeptide: Large ribosomal subunit protein uL1 (219 aa).

This sequence belongs to the universal ribosomal protein uL1 family. In terms of assembly, part of the 50S ribosomal subunit.

Functionally, binds directly to 23S rRNA. Probably involved in E site tRNA release. Its function is as follows. Protein L1 is also a translational repressor protein, it controls the translation of its operon by binding to its mRNA. The protein is Large ribosomal subunit protein uL1 of Pyrococcus abyssi (strain GE5 / Orsay).